A 285-amino-acid polypeptide reads, in one-letter code: Bis(5'-nucleosyl)-tetraphosphatase, symmetrical (285 aa).

It belongs to the Ap4A hydrolase family.

It carries out the reaction P(1),P(4)-bis(5'-adenosyl) tetraphosphate + H2O = 2 ADP + 2 H(+). In terms of biological role, hydrolyzes diadenosine 5',5'''-P1,P4-tetraphosphate to yield ADP. In Colwellia psychrerythraea (strain 34H / ATCC BAA-681) (Vibrio psychroerythus), this protein is Bis(5'-nucleosyl)-tetraphosphatase, symmetrical.